The sequence spans 659 residues: Protein kinase byr2 (659 aa).

The 64-residue stretch at 4–67 folds into the SAM domain; the sequence is YTSKEVAEWL…LKQRDYLREF (64 aa). The segment covering 180–190 has biased composition (low complexity); it reads PKLSSVLPTST. 2 disordered regions span residues 180–209 and 354–387; these read PKLS…YQRP and SFSP…EEDT. Polar residues predominate over residues 354 to 365; sequence SFSPGSSPSFIE. Low complexity predominate over residues 367 to 380; it reads PSPISPTSTTSEDT. In terms of domain architecture, Protein kinase spans 394–658; the sequence is WIRGALIGSG…ASELLSHPFV (265 aa). Residues 400 to 408 and lysine 423 each bind ATP; that span reads IGSGSFGQV. Aspartate 522 serves as the catalytic Proton acceptor.

Belongs to the protein kinase superfamily. STE Ser/Thr protein kinase family. MAP kinase kinase kinase subfamily. As to quaternary structure, interacts with rad24 and rad25; these prevent its translocation to the cell membrane during nitrogen starvation.

The protein resides in the cytoplasm. Its subcellular location is the cell membrane. The enzyme catalyses L-seryl-[protein] + ATP = O-phospho-L-seryl-[protein] + ADP + H(+). It carries out the reaction L-threonyl-[protein] + ATP = O-phospho-L-threonyl-[protein] + ADP + H(+). In terms of biological role, serine/threonine protein kinase involved in conjugation and sporulation. It is thought that it phosphorylates the byr1 protein kinase which itself phosphorylate the spk1 kinase. This chain is Protein kinase byr2, found in Schizosaccharomyces pombe (strain 972 / ATCC 24843) (Fission yeast).